We begin with the raw amino-acid sequence, 874 residues long: Valine--tRNA ligase (874 aa).

Residues M1–P22 form a disordered region. The short motif at P57 to H67 is the 'HIGH' region element. Residues K531–S535 carry the 'KMSKS' region motif. K534 lines the ATP pocket. Positions V805 to L871 form a coiled coil.

This sequence belongs to the class-I aminoacyl-tRNA synthetase family. ValS type 1 subfamily. Monomer.

The protein resides in the cytoplasm. The enzyme catalyses tRNA(Val) + L-valine + ATP = L-valyl-tRNA(Val) + AMP + diphosphate. In terms of biological role, catalyzes the attachment of valine to tRNA(Val). As ValRS can inadvertently accommodate and process structurally similar amino acids such as threonine, to avoid such errors, it has a 'posttransfer' editing activity that hydrolyzes mischarged Thr-tRNA(Val) in a tRNA-dependent manner. The protein is Valine--tRNA ligase of Streptomyces coelicolor (strain ATCC BAA-471 / A3(2) / M145).